A 236-amino-acid chain; its full sequence is Probable transcriptional activator protein TraR (236 aa).

The 66-residue stretch at 169-234 (VLNPKQMLSP…QLVAIAKDRG (66 aa)) folds into the HTH luxR-type domain. The H-T-H motif DNA-binding region spans 193-212 (ASVTANLTGINARTVQHYLD).

It belongs to the autoinducer-regulated transcriptional regulatory protein family.

In terms of biological role, positive regulation of conjugal transfer. TraR activates target genes in the presence of AAI and also activates traR and traI themselves. In Sinorhizobium fredii (strain NBRC 101917 / NGR234), this protein is Probable transcriptional activator protein TraR (traR).